The primary structure comprises 178 residues: Endoribonuclease YbeY (178 aa).

Residues His118, His122, and His128 each coordinate Zn(2+). The disordered stretch occupies residues Tyr156–Pro178. Residues Asp159–Pro178 show a composition bias toward basic and acidic residues.

It belongs to the endoribonuclease YbeY family. Zn(2+) is required as a cofactor.

It localises to the cytoplasm. Functionally, single strand-specific metallo-endoribonuclease involved in late-stage 70S ribosome quality control and in maturation of the 3' terminus of the 16S rRNA. The polypeptide is Endoribonuclease YbeY (Mycobacterium marinum (strain ATCC BAA-535 / M)).